Here is a 343-residue protein sequence, read N- to C-terminus: MEVSKAEQAIYDRQIRLWGMEAQNKIRNSKVLIIGGKQLGAEVAKTLSLAGVDEMHLVDHRLVDTEEIGMNFLYDASVDNSKMTKWAASYNFLYNLNRNVKLFIVEEDVLSKNDSEIEEYLTKFTLVVVLDESYERTAKVNNICRKHHIRFISGAIYGWIGYAFFDFDGHAYLVKAKSPDCLNEEESETGKTSTVVTVDEEFVLETFSYPSFVETLNSDFTAKKIVRKCKRIVPTSYFLVKSMLRASSENKLTGVTENDIEKLIPIWNEEVAAGNHTIDMQPVQPDRFDHLFGPNFGPTAACVGGVIGQEAIKSISEGKNPLRNLFIYTGFESTGFMCNFPPV.

This sequence belongs to the ubiquitin-activating E1 family. As to quaternary structure, heterodimer of aos-1 and uba-2.

It functions in the pathway protein modification; protein sumoylation. Its function is as follows. The dimeric enzyme acts as an E1 ligase for smo-1. It mediates ATP-dependent activation of smo-1 and formation of a thioester with a conserved cysteine residue on uba-2. The sequence is that of SUMO-activating enzyme subunit aos-1 (aos-1) from Caenorhabditis elegans.